A 152-amino-acid chain; its full sequence is SsrA-binding protein (152 aa).

This sequence belongs to the SmpB family.

Its subcellular location is the cytoplasm. Its function is as follows. Required for rescue of stalled ribosomes mediated by trans-translation. Binds to transfer-messenger RNA (tmRNA), required for stable association of tmRNA with ribosomes. tmRNA and SmpB together mimic tRNA shape, replacing the anticodon stem-loop with SmpB. tmRNA is encoded by the ssrA gene; the 2 termini fold to resemble tRNA(Ala) and it encodes a 'tag peptide', a short internal open reading frame. During trans-translation Ala-aminoacylated tmRNA acts like a tRNA, entering the A-site of stalled ribosomes, displacing the stalled mRNA. The ribosome then switches to translate the ORF on the tmRNA; the nascent peptide is terminated with the 'tag peptide' encoded by the tmRNA and targeted for degradation. The ribosome is freed to recommence translation, which seems to be the essential function of trans-translation. The polypeptide is SsrA-binding protein (Rickettsia felis (strain ATCC VR-1525 / URRWXCal2) (Rickettsia azadi)).